A 223-amino-acid chain; its full sequence is Thylakoid lumenal 15.0 kDa protein 2, chloroplastic (223 aa).

The protein resides in the plastid. It localises to the chloroplast thylakoid lumen. In Arabidopsis thaliana (Mouse-ear cress), this protein is Thylakoid lumenal 15.0 kDa protein 2, chloroplastic.